A 354-amino-acid polypeptide reads, in one-letter code: UDP-N-acetylglucosamine--N-acetylmuramyl-(pentapeptide) pyrophosphoryl-undecaprenol N-acetylglucosamine transferase 3 (354 aa).

UDP-N-acetyl-alpha-D-glucosamine is bound by residues 12-14, Arg-163, Ser-193, and Gln-287; that span reads TAG.

Belongs to the glycosyltransferase 28 family. MurG subfamily.

The protein localises to the cell membrane. The enzyme catalyses di-trans,octa-cis-undecaprenyl diphospho-N-acetyl-alpha-D-muramoyl-L-alanyl-D-glutamyl-meso-2,6-diaminopimeloyl-D-alanyl-D-alanine + UDP-N-acetyl-alpha-D-glucosamine = di-trans,octa-cis-undecaprenyl diphospho-[N-acetyl-alpha-D-glucosaminyl-(1-&gt;4)]-N-acetyl-alpha-D-muramoyl-L-alanyl-D-glutamyl-meso-2,6-diaminopimeloyl-D-alanyl-D-alanine + UDP + H(+). Its pathway is cell wall biogenesis; peptidoglycan biosynthesis. Cell wall formation. Catalyzes the transfer of a GlcNAc subunit on undecaprenyl-pyrophosphoryl-MurNAc-pentapeptide (lipid intermediate I) to form undecaprenyl-pyrophosphoryl-MurNAc-(pentapeptide)GlcNAc (lipid intermediate II). The protein is UDP-N-acetylglucosamine--N-acetylmuramyl-(pentapeptide) pyrophosphoryl-undecaprenol N-acetylglucosamine transferase 3 of Bacillus cereus (strain ATCC 14579 / DSM 31 / CCUG 7414 / JCM 2152 / NBRC 15305 / NCIMB 9373 / NCTC 2599 / NRRL B-3711).